We begin with the raw amino-acid sequence, 443 residues long: ATP-dependent protease ATPase subunit HslU (443 aa).

ATP contacts are provided by residues Ile-20, 62 to 67 (GVGKTE), Asp-255, Glu-321, and Arg-393.

This sequence belongs to the ClpX chaperone family. HslU subfamily. A double ring-shaped homohexamer of HslV is capped on each side by a ring-shaped HslU homohexamer. The assembly of the HslU/HslV complex is dependent on binding of ATP.

Its subcellular location is the cytoplasm. ATPase subunit of a proteasome-like degradation complex; this subunit has chaperone activity. The binding of ATP and its subsequent hydrolysis by HslU are essential for unfolding of protein substrates subsequently hydrolyzed by HslV. HslU recognizes the N-terminal part of its protein substrates and unfolds these before they are guided to HslV for hydrolysis. The sequence is that of ATP-dependent protease ATPase subunit HslU from Helicobacter pylori (strain J99 / ATCC 700824) (Campylobacter pylori J99).